The primary structure comprises 239 residues: Transcriptional regulatory protein BtsR (239 aa).

The region spanning 3-116 (KVLIVDDEPL…RLEKTLARLR (114 aa)) is the Response regulatory domain. Asp-54 bears the 4-aspartylphosphate mark. Positions 137-239 (IPCTGHSRIY…LKSLKEAIGL (103 aa)) constitute an HTH LytTR-type domain.

Phosphorylated by BtsS.

Its function is as follows. Member of the two-component regulatory system BtsS/BtsR. BtsR regulates expression of btsT by binding to its promoter region. The protein is Transcriptional regulatory protein BtsR of Escherichia coli O6:H1 (strain CFT073 / ATCC 700928 / UPEC).